A 309-amino-acid chain; its full sequence is MPVINNQVVLKHLVSMELLTNEEVLGLISRGSEFKAKNVPIANNSHYFTSNLFFENSTRTHKSFEMAERHMGLQVVEFNTDTSSVNKGETLYDTILTMSALGVDICVVRHPEVDYYQSLIKSPSITASIVNGGDGSGQHPSQCLLDLMTIYEEFGHFEGLKIMIAGDLVHSRVAKSNMQILKRLGAEIYFSGPDEWYSKEFEAYGEYRKIDDIIDQLDVLMLLRVQHERHNGSAGFSKEEYHKNFGLTEERYEKLKDTAIIMHPAPVNRNAEIADSLVEAKKARIVAQMENGVYVRMAILEAILNGRSA.

Residues arginine 59 and threonine 60 each contribute to the carbamoyl phosphate site. Residue lysine 87 participates in L-aspartate binding. Positions 109, 139, and 142 each coordinate carbamoyl phosphate. 2 residues coordinate L-aspartate: arginine 172 and arginine 224. Positions 265 and 266 each coordinate carbamoyl phosphate.

The protein belongs to the aspartate/ornithine carbamoyltransferase superfamily. ATCase family. Heterododecamer (2C3:3R2) of six catalytic PyrB chains organized as two trimers (C3), and six regulatory PyrI chains organized as three dimers (R2).

The catalysed reaction is carbamoyl phosphate + L-aspartate = N-carbamoyl-L-aspartate + phosphate + H(+). It participates in pyrimidine metabolism; UMP biosynthesis via de novo pathway; (S)-dihydroorotate from bicarbonate: step 2/3. Catalyzes the condensation of carbamoyl phosphate and aspartate to form carbamoyl aspartate and inorganic phosphate, the committed step in the de novo pyrimidine nucleotide biosynthesis pathway. The protein is Aspartate carbamoyltransferase catalytic subunit of Streptococcus uberis (strain ATCC BAA-854 / 0140J).